The primary structure comprises 95 residues: Integration host factor subunit beta (95 aa).

The disordered stretch occupies residues 59–95; it reads RVGRNPKTGQSVRLDGKFVPHFKPGKELRDRVNEDES. Basic and acidic residues predominate over residues 72–95; sequence LDGKFVPHFKPGKELRDRVNEDES.

This sequence belongs to the bacterial histone-like protein family. In terms of assembly, heterodimer of an alpha and a beta chain.

Its function is as follows. This protein is one of the two subunits of integration host factor, a specific DNA-binding protein that functions in genetic recombination as well as in transcriptional and translational control. This Ectopseudomonas mendocina (strain ymp) (Pseudomonas mendocina) protein is Integration host factor subunit beta.